Here is a 45-residue protein sequence, read N- to C-terminus: MTSGNNINQPVTYPIFTVRWIAVHTLAVPTVFFLGAIASMQFIQR.

The helical transmembrane segment at 20 to 36 (WIAVHTLAVPTVFFLGA) threads the bilayer. Residue His-24 coordinates heme.

The protein belongs to the PsbE/PsbF family. As to quaternary structure, heterodimer of an alpha subunit and a beta subunit. PSII is composed of 1 copy each of membrane proteins PsbA, PsbB, PsbC, PsbD, PsbE, PsbF, PsbH, PsbI, PsbJ, PsbK, PsbL, PsbM, PsbT, PsbX, PsbY, PsbZ, Psb30/Ycf12, peripheral proteins PsbO, CyanoQ (PsbQ), PsbU, PsbV and a large number of cofactors. It forms dimeric complexes. The cofactor is heme b.

The protein resides in the cellular thylakoid membrane. Its function is as follows. This b-type cytochrome is tightly associated with the reaction center of photosystem II (PSII). PSII is a light-driven water:plastoquinone oxidoreductase that uses light energy to abstract electrons from H(2)O, generating O(2) and a proton gradient subsequently used for ATP formation. It consists of a core antenna complex that captures photons, and an electron transfer chain that converts photonic excitation into a charge separation. The chain is Cytochrome b559 subunit beta from Nostoc sp. (strain PCC 7120 / SAG 25.82 / UTEX 2576).